Here is a 406-residue protein sequence, read N- to C-terminus: Phosphopentomutase (406 aa).

Residues aspartate 10, aspartate 305, histidine 310, aspartate 346, histidine 347, and histidine 358 each contribute to the Mn(2+) site.

Belongs to the phosphopentomutase family. Mn(2+) serves as cofactor.

Its subcellular location is the cytoplasm. It carries out the reaction 2-deoxy-alpha-D-ribose 1-phosphate = 2-deoxy-D-ribose 5-phosphate. The catalysed reaction is alpha-D-ribose 1-phosphate = D-ribose 5-phosphate. Its pathway is carbohydrate degradation; 2-deoxy-D-ribose 1-phosphate degradation; D-glyceraldehyde 3-phosphate and acetaldehyde from 2-deoxy-alpha-D-ribose 1-phosphate: step 1/2. Isomerase that catalyzes the conversion of deoxy-ribose 1-phosphate (dRib-1-P) and ribose 1-phosphate (Rib-1-P) to deoxy-ribose 5-phosphate (dRib-5-P) and ribose 5-phosphate (Rib-5-P), respectively. The protein is Phosphopentomutase of Methylobacterium radiotolerans (strain ATCC 27329 / DSM 1819 / JCM 2831 / NBRC 15690 / NCIMB 10815 / 0-1).